Consider the following 274-residue polypeptide: Undecaprenyl-diphosphatase 1 (274 aa).

7 helical membrane-spanning segments follow: residues Gln47–Asn67, Val85–Phe105, Phe113–Ile133, Ile150–Gly170, Phe196–Leu216, Ile225–Met245, and Phe253–Ile273.

The protein belongs to the UppP family.

The protein localises to the cell membrane. The enzyme catalyses di-trans,octa-cis-undecaprenyl diphosphate + H2O = di-trans,octa-cis-undecaprenyl phosphate + phosphate + H(+). Functionally, catalyzes the dephosphorylation of undecaprenyl diphosphate (UPP). Confers resistance to bacitracin. In Clostridium acetobutylicum (strain ATCC 824 / DSM 792 / JCM 1419 / IAM 19013 / LMG 5710 / NBRC 13948 / NRRL B-527 / VKM B-1787 / 2291 / W), this protein is Undecaprenyl-diphosphatase 1.